The chain runs to 306 residues: Porphobilinogen deaminase (306 aa).

An S-(dipyrrolylmethanemethyl)cysteine modification is found at Cys-239.

The protein belongs to the HMBS family. Monomer. Dipyrromethane serves as cofactor.

The catalysed reaction is 4 porphobilinogen + H2O = hydroxymethylbilane + 4 NH4(+). It participates in porphyrin-containing compound metabolism; protoporphyrin-IX biosynthesis; coproporphyrinogen-III from 5-aminolevulinate: step 2/4. In terms of biological role, tetrapolymerization of the monopyrrole PBG into the hydroxymethylbilane pre-uroporphyrinogen in several discrete steps. The protein is Porphobilinogen deaminase (hemC) of Helicobacter pylori (strain J99 / ATCC 700824) (Campylobacter pylori J99).